Reading from the N-terminus, the 84-residue chain is Small ribosomal subunit protein bS18 (84 aa).

The protein belongs to the bacterial ribosomal protein bS18 family. Part of the 30S ribosomal subunit. Forms a tight heterodimer with protein bS6.

Its function is as follows. Binds as a heterodimer with protein bS6 to the central domain of the 16S rRNA, where it helps stabilize the platform of the 30S subunit. This chain is Small ribosomal subunit protein bS18, found in Maricaulis maris (strain MCS10) (Caulobacter maris).